Here is a 403-residue protein sequence, read N- to C-terminus: 3-hydroxy-3-methylglutaryl-coenzyme A reductase (403 aa).

Active-site charge relay system residues include E99 and D303. H398 acts as the Proton donor in catalysis.

The protein belongs to the HMG-CoA reductase family.

The catalysed reaction is (R)-mevalonate + 2 NADP(+) + CoA = (3S)-3-hydroxy-3-methylglutaryl-CoA + 2 NADPH + 2 H(+). It functions in the pathway metabolic intermediate biosynthesis; (R)-mevalonate biosynthesis; (R)-mevalonate from acetyl-CoA: step 3/3. With respect to regulation, is competitively inhibited by (R)-HMG-CoA and lovastatin (formerly called mevinolin). In terms of biological role, catalyzes the NADPH-dependent reductive deacylation of (S)-3-hydroxy-3-methylglutaryl-CoA (HMG-CoA) to (R)-mevalonate. Functions in the mevalonate (MVA) pathway leading to isopentenyl diphosphate (IPP), a key precursor for the biosynthesis of isoprenoid compounds such as archaeal membrane lipids. Is also able to catalyze the reduction of mevaldehyde to mevalonate and the oxidative acylation of mevaldehyde to HMG-CoA. The polypeptide is 3-hydroxy-3-methylglutaryl-coenzyme A reductase (hmgA) (Haloferax volcanii (strain ATCC 29605 / DSM 3757 / JCM 8879 / NBRC 14742 / NCIMB 2012 / VKM B-1768 / DS2) (Halobacterium volcanii)).